The chain runs to 759 residues: Rab guanine nucleotide exchange factor SEC2 (759 aa).

M1 carries the N-acetylmethionine modification. Residues 26 to 164 are a coiled coil; it reads DKQSHLEEQL…KKVMHSLDNE (139 aa). T168 carries the post-translational modification Phosphothreonine. The residue at position 171 (S171) is a Phosphoserine. The interval 451–508 is required for proper polarized localization of the protein; that stretch reads TKNKPKMEIFSSETNAKPGQPTTNIQRAWLQLCKLRCILHWTHIGIWAVDDSISSKIG. Position 515 is a phosphoserine (S515). Residues 538-759 form a disordered region; the sequence is KRPFSSSSAE…DNFDDAQEQQ (222 aa). Acidic residues predominate over residues 555–576; it reads FDFESGDMENEITGESSSDESS. 2 stretches are compositionally biased toward low complexity: residues 577 to 589 and 597 to 612; these read SDGS…TADS and LADS…SPES. Over residues 648–664 the composition is skewed to basic residues; that stretch reads RSIIKKKAPQRKIQKKK. A coiled-coil region spans residues 651-682; it reads IKKKAPQRKIQKKKLLQDLDDLEEQFREESAI. The segment covering 690 to 703 has biased composition (polar residues); that stretch reads AESNVKQNISSKRA. Basic and acidic residues predominate over residues 704–719; sequence SSGDENSKKDNNEKTL. The segment covering 731 to 744 has biased composition (polar residues); the sequence is EQIGENSPSSGLHA. Residues 732-759 are a coiled coil; it reads QIGENSPSSGLHASSSNDDNFDDAQEQQ. The span at 750 to 759 shows a compositional bias: acidic residues; sequence DNFDDAQEQQ.

This sequence belongs to the SEC2 family. As to quaternary structure, interacts with SEC4. Interacts with YPT32, preferentially in its GTP-bound form.

It localises to the bud neck. The protein localises to the bud tip. It is found in the cytoplasmic vesicle. The protein resides in the secretory vesicle. Functionally, guanine nucleotide exchange factor for SEC4, catalyzing the dissociation of GDP from SEC4 and also potently promoting binding of GTP. Activation of SEC4 by SEC2 is needed for the directed transport of vesicles to sites of exocytosis. Binds the Rab GTPase YPT32, but does not have exchange activity on YPT32. This chain is Rab guanine nucleotide exchange factor SEC2 (SEC2), found in Saccharomyces cerevisiae (strain ATCC 204508 / S288c) (Baker's yeast).